We begin with the raw amino-acid sequence, 349 residues long: N-acetyltaurine hydrolase (349 aa).

His-26, His-28, Glu-169, His-201, His-230, and Asp-298 together coordinate a divalent metal cation.

It belongs to the metallo-dependent hydrolases superfamily. Phosphotriesterase family. Requires a divalent metal cation as cofactor.

Its subcellular location is the cytoplasm. The protein resides in the cytosol. The enzyme catalyses N-acetyltaurine + H2O = taurine + acetate. It carries out the reaction N-propanoyltaurine + H2O = propanoate + taurine. The catalysed reaction is N-acetyl-L-methionine + H2O = L-methionine + acetate. It catalyses the reaction N-acetyl-L-isoleucine + H2O = L-isoleucine + acetate. The enzyme catalyses N-acetyl-L-leucine + H2O = L-leucine + acetate. It carries out the reaction N-acetyl-L-valine + H2O = L-valine + acetate. N-acetyltaurine hydrolase that regulates feeding by catalyzing the hydrolysis of N-acetyltaurine into taurine and acetate. N-acetyltaurine has anorexigenic and anti-obesity effects that are dependent on GFRAL receptor and GDF15. PTER also acts on other N-acetyl amino acids (Met, Ile, Leu, Val) and N-propionyltaurine, but at lower rates. The sequence is that of N-acetyltaurine hydrolase from Homo sapiens (Human).